A 43-amino-acid chain; its full sequence is Protein PsbN (43 aa).

The chain crosses the membrane as a helical span at residues 7–27 (LIVFIASLLLGVTGYSVYTAF).

This sequence belongs to the PsbN family.

It localises to the plastid. It is found in the chloroplast thylakoid membrane. May play a role in photosystem I and II biogenesis. This Rhodomonas salina (Cryptomonas salina) protein is Protein PsbN.